Consider the following 377-residue polypeptide: 6-oxocyclohex-1-ene-1-carbonyl-CoA hydrolase (377 aa).

The protein belongs to the enoyl-CoA hydratase/isomerase family. In terms of assembly, homotetramer.

It carries out the reaction 6-oxocyclohex-1-ene-1-carbonyl-CoA + 2 H2O = 3-hydroxy-6-carboxyhexanoyl-CoA + H(+). It participates in aromatic compound metabolism; benzoyl-CoA degradation. Functionally, involved in the central benzoyl-CoA catabolism. Catalyzes the addition of one molecule of water to the double bond and the hydrolytic cleavage of C-C bond in the alicyclic ring, 6-oxocyclohex-1-ene-1-carbonyl-CoA (6-OCH-CoA) to yield 3-hydroxypimelyl-CoA. The sequence is that of 6-oxocyclohex-1-ene-1-carbonyl-CoA hydrolase (oah) from Thauera aromatica.